The chain runs to 773 residues: C-Maf-inducing protein (773 aa).

The segment at 1–30 is disordered; that stretch reads MDVTSSSGGGGDPRQIEETKPLLGGDVSAP. The PH domain occupies 54–163; it reads LLQEGDIQVC…HSLQWKKKIY (110 aa). Phosphoserine is present on residues S349, S377, S382, and S660. LRR repeat units follow at residues 663–686, 687–707, 712–732, and 736–756; these read NLEN…IKLP, SLKQ…RLLS, MLQV…LALS, and SLCS…EDLK.

As to quaternary structure, interacts with FLNA. Isoform 1 is expressed in peripheral blood mononuclear cells and kidney. Lower expression in brain and liver. Expression is down-regulated in activated cells. Isoform 2 is expressed in lymphocyte precursors, however, expression shuts down during maturation and differentiation in thymus and fetal liver.

Its subcellular location is the nucleus. It is found in the cytoplasm. Its function is as follows. Plays a role in T-cell signaling pathway. Isoform 2 may play a role in T-helper 2 (Th2) signaling pathway and seems to represent the first proximal signaling protein that links T-cell receptor-mediated signal to the activation of c-Maf Th2 specific factor. The polypeptide is C-Maf-inducing protein (CMIP) (Homo sapiens (Human)).